The chain runs to 211 residues: Claudin-7 (211 aa).

Over 1-7 (MANSGLQ) the chain is Cytoplasmic. Residues 8-28 (LLGFSMAMLGWVGLIASTAIP) form a helical membrane-spanning segment. At 29-81 (QWQMSSYAGDNIITAQAMYKGLWMECVTQSTGMMSCKMYDSVLALPAATQATR) the chain is on the extracellular side. The chain crosses the membrane as a helical span at residues 82–102 (ALMIVSLVLGFLAMFVATMGM). The Cytoplasmic portion of the chain corresponds to 103-119 (KCTRCGGDDKVKKARIA). Residues 120 to 140 (MTGGIIFIVAGLAALVACSWI) form a helical membrane-spanning segment. Over 141 to 160 (GHQIVTDFYNPLTPMNIKYE) the chain is Extracellular. The chain crosses the membrane as a helical span at residues 161–181 (FGPAIFIGWAGSALVLLGGAL). The Cytoplasmic segment spans residues 182–211 (LSCSCPGSESKAAYRAPRSYPKSNSSKEYV). Residues 210–211 (YV) form an interactions with TJP1, TJP2 and TJP3 region.

The protein belongs to the claudin family. Directly interacts with TJP1/ZO-1, TJP2/ZO-2 and TJP3/ZO-3. The phosphorylated form interacts with EPCAM. Post-translationally, phosphorylated.

Its subcellular location is the cell membrane. It localises to the basolateral cell membrane. The protein localises to the cell junction. It is found in the tight junction. Plays a major role in tight junction-specific obliteration of the intercellular space. The chain is Claudin-7 (Cldn7) from Rattus norvegicus (Rat).